The chain runs to 1816 residues: Kinesin-like protein KIF1B (1816 aa).

Position 2 is an N-acetylserine (serine 2). Positions 5–354 (SVKVAVRVRP…LRYADRAKQI (350 aa)) constitute a Kinesin motor domain. 97–104 (GQTGAGKS) provides a ligand contact to ATP. The tract at residues 270–350 (NINKSLTTLG…TLSTLRYADR (81 aa)) is interaction with KIFBP. The segment at 431-450 (FSTASMGSLTSSPSSCSLNS) is disordered. Residues 432-450 (STASMGSLTSSPSSCSLNS) are compositionally biased toward low complexity. Residues 470–512 (GEEAIERLKESEKIIAELNETWEEKLRKTEAIRMEREALLAEM) adopt a coiled-coil conformation. The region spanning 556 to 612 (TRVGQADAERRQDIVLSGAHIKEEHCIFRSERNNTGEVIVTLEPCERSETYVNGKRV) is the FHA domain. Phosphothreonine is present on residues threonine 647 and threonine 652. Residues 672–731 (IDMKQEMEKRLQEMEILYKREKEEADLLLEQQRLDYESKLQALQKQVETRSLAAETTEEE) are a coiled coil. Phosphoserine is present on residues serine 1054, serine 1057, serine 1416, serine 1454, and serine 1487. A disordered region spans residues 1550-1570 (STTTFESAITPSESSGYDSAD). Residues serine 1573, serine 1603, serine 1610, and serine 1613 each carry the phosphoserine modification. Low complexity predominate over residues 1620 to 1637 (SVSSFSSSTLTPSSTCPS). The tract at residues 1620-1659 (SVSSFSSSTLTPSSTCPSLVDSRSSSMDQKTPEANSRASS) is disordered. Positions 1640-1659 (DSRSSSMDQKTPEANSRASS) are enriched in polar residues. A PH domain is found at 1701-1799 (VVSKKGYLHF…WLYAFNPLLA (99 aa)).

It belongs to the TRAFAC class myosin-kinesin ATPase superfamily. Kinesin family. Unc-104 subfamily. Monomer. Interacts with KIFBP; positively regulates KIF1B microtubule motor activity. Interacts (via C-terminus end of the kinesin-motor domain) with CHP1; the interaction occurs in a calcium-dependent manner. Interacts with MADD (via death domain); links this isoform of KIF1B to Rab3-carrying vesicles in anterograde synaptic vesicle transport. As to expression, expressed in the brain with lower expression in testis and liver (at protein level). Strongly expressed in the brain and ovary, with lower expression in lung, kidney, uterus, testis and liver. Isoform 2 is expressed in non-neuronal tissues.

The protein resides in the cytoplasm. The protein localises to the cytoskeleton. It is found in the cytoplasmic vesicle. Its subcellular location is the secretory vesicle. It localises to the synaptic vesicle membrane. The protein resides in the lysosome. The catalysed reaction is ATP + H2O + a kinesin associated with a microtubule at position (n) = ADP + phosphate a kinesin associated with a microtubule at position (n+1, toward the plus end).. Has a plus-end-directed microtubule motor activity and functions as a motor for transport of vesicles and organelles along microtubules. Functionally, has a plus-end-directed microtubule motor activity and functions as a motor for anterograde synaptic vesicle transport along axonal microtubules from the cell body to the presynapse in neuronal cells. In terms of biological role, has a plus-end-directed microtubule motor activity and functions as a motor for the translocation of lysosomes from perinuclear regions to the cell periphery. The polypeptide is Kinesin-like protein KIF1B (Rattus norvegicus (Rat)).